We begin with the raw amino-acid sequence, 86 residues long: RNA-binding protein Hfq (86 aa).

The region spanning 9 to 69 is the Sm domain; it reads DRFLNILRTS…VSTIMPESFV (61 aa).

The protein belongs to the Hfq family. As to quaternary structure, homohexamer.

Functionally, RNA chaperone that binds small regulatory RNA (sRNAs) and mRNAs to facilitate mRNA translational regulation in response to envelope stress, environmental stress and changes in metabolite concentrations. Also binds with high specificity to tRNAs. This chain is RNA-binding protein Hfq, found in Thermosipho melanesiensis (strain DSM 12029 / CIP 104789 / BI429).